The chain runs to 130 residues: Small ribosomal subunit protein uS9 (130 aa).

It belongs to the universal ribosomal protein uS9 family.

This is Small ribosomal subunit protein uS9 from Oceanobacillus iheyensis (strain DSM 14371 / CIP 107618 / JCM 11309 / KCTC 3954 / HTE831).